Reading from the N-terminus, the 171-residue chain is Adenine phosphoribosyltransferase (171 aa).

This sequence belongs to the purine/pyrimidine phosphoribosyltransferase family. Homodimer.

The protein resides in the cytoplasm. The enzyme catalyses AMP + diphosphate = 5-phospho-alpha-D-ribose 1-diphosphate + adenine. It functions in the pathway purine metabolism; AMP biosynthesis via salvage pathway; AMP from adenine: step 1/1. Catalyzes a salvage reaction resulting in the formation of AMP, that is energically less costly than de novo synthesis. The protein is Adenine phosphoribosyltransferase of Geotalea daltonii (strain DSM 22248 / JCM 15807 / FRC-32) (Geobacter daltonii).